Here is a 27-residue protein sequence, read N- to C-terminus: Cupiennin-4a (27 aa).

Glu-27 is modified (glutamic acid 1-amide).

As to expression, expressed by the venom gland.

Its subcellular location is the secreted. This Cupiennius salei (American wandering spider) protein is Cupiennin-4a.